The following is an 860-amino-acid chain: Pentatricopeptide repeat-containing protein At1g18900 (860 aa).

8 PPR repeats span residues 363–397 (DGHT…GCQP), 398–432 (NTVT…GCKP), 433–467 (DRVT…GLSP), 468–502 (DTFT…GCTP), 503–537 (NLVT…GFEP), 538–572 (DKVT…NWIP), 573–607 (DEPV…GLRP), and 608–642 (NVPT…GLRP). In terms of domain architecture, Smr spans 760 to 843 (INLHVMSEGT…NSGCFVGSGE (84 aa)).

It belongs to the PPR family. P subfamily.

This Arabidopsis thaliana (Mouse-ear cress) protein is Pentatricopeptide repeat-containing protein At1g18900.